We begin with the raw amino-acid sequence, 282 residues long: Putative 4-diphosphocytidyl-2-C-methyl-D-erythritol kinase (282 aa).

K9 is an active-site residue. ATP is bound at residue 93-103; the sequence is PVSAGLAGGSA. D135 is a catalytic residue.

Belongs to the GHMP kinase family. IspE subfamily.

The catalysed reaction is 4-CDP-2-C-methyl-D-erythritol + ATP = 4-CDP-2-C-methyl-D-erythritol 2-phosphate + ADP + H(+). Functionally, catalyzes the phosphorylation of the position 2 hydroxy group of 4-diphosphocytidyl-2C-methyl-D-erythritol. In Staphylococcus aureus (strain bovine RF122 / ET3-1), this protein is Putative 4-diphosphocytidyl-2-C-methyl-D-erythritol kinase.